The following is a 259-amino-acid chain: Glutamate racemase (259 aa).

Substrate is bound by residues 7-8 and 39-40; these read DS and YG. Cys-70 acts as the Proton donor/acceptor in catalysis. Position 71-72 (71-72) interacts with substrate; that stretch reads NT. Cys-180 (proton donor/acceptor) is an active-site residue. 181–182 contributes to the substrate binding site; that stretch reads TH.

This sequence belongs to the aspartate/glutamate racemases family.

It catalyses the reaction L-glutamate = D-glutamate. It participates in cell wall biogenesis; peptidoglycan biosynthesis. Provides the (R)-glutamate required for cell wall biosynthesis. The protein is Glutamate racemase of Persephonella marina (strain DSM 14350 / EX-H1).